A 337-amino-acid chain; its full sequence is CMP-N-acetylneuraminate-beta-galactosamide-alpha-2,3-sialyltransferase 1 (337 aa).

Over 1–4 the chain is Cytoplasmic; that stretch reads MRRK. Residues 5–25 form a helical; Signal-anchor for type II membrane protein membrane-spanning segment; it reads TLKYLTFFLLFIFLTSFVLNY. Residues 26-337 lie on the Lumenal side of the membrane; it reads SNTGVPSAWF…INKIRIFKGR (312 aa). 3 disulfide bridges follow: C56–C61, C58–C136, and C139–C278. N-linked (GlcNAc...) asparagine glycosylation occurs at N76. Q102 lines the substrate pocket. Residue N109 is glycosylated (N-linked (GlcNAc...) asparagine). Residues N144, N167, Y227, Y263, G267, G287, H296, and H313 each contribute to the substrate site. N-linked (GlcNAc...) asparagine glycosylation is present at N320.

The protein belongs to the glycosyltransferase 29 family. In terms of processing, the soluble form derives from the membrane form by proteolytic processing. In terms of tissue distribution, highly expressed in submaxillary gland and to a much lesser extent in liver, lung, kidney, heart and brain.

It localises to the golgi apparatus. The protein resides in the golgi stack membrane. Its subcellular location is the trans-Golgi network membrane. The protein localises to the secreted. It catalyses the reaction a beta-D-galactosyl-(1-&gt;3)-N-acetyl-alpha-D-galactosaminyl derivative + CMP-N-acetyl-beta-neuraminate = an N-acetyl-alpha-neuraminyl-(2-&gt;3)-beta-D-galactosyl-(1-&gt;3)-N-acetyl-alpha-D-galactosaminyl derivative + CMP + H(+). It carries out the reaction a ganglioside GM1 (d18:1(4E)) + CMP-N-acetyl-beta-neuraminate = a ganglioside GD1a (d18:1(4E)) + CMP + H(+). The catalysed reaction is ganglioside GM1 (d18:1(4E)/18:0) + CMP-N-acetyl-beta-neuraminate = ganglioside GD1a (18:1(4E)/18:0) + CMP + H(+). The enzyme catalyses a ganglioside GA1 + CMP-N-acetyl-beta-neuraminate = a ganglioside GM1b + CMP + H(+). It catalyses the reaction a ganglioside GA1 (d18:1(4E)) + CMP-N-acetyl-beta-neuraminate = a ganglioside GM1b (d18:1(4E)) + CMP + H(+). It carries out the reaction a ganglioside GD1b + CMP-N-acetyl-beta-neuraminate = a ganglioside GT1b + CMP + H(+). The catalysed reaction is a 3-O-[beta-D-galactosyl-(1-&gt;3)-N-acetyl-alpha-D-galactosaminyl]-L-threonyl-[protein] + CMP-N-acetyl-beta-neuraminate = a 3-O-[N-acetyl-alpha-neuraminyl-(2-&gt;3)-beta-D-galactosyl-(1-&gt;3)-N-acetyl-alpha-D-galactosaminyl]-L-threonyl-[protein] + CMP + H(+). The enzyme catalyses a 3-O-[beta-D-galactosyl-(1-&gt;3)-N-acetyl-alpha-D-galactosaminyl]-L-seryl-[protein] + CMP-N-acetyl-beta-neuraminate = 3-O-[N-acetyl-alpha-neuraminyl-(2-&gt;3)-beta-D-galactosyl-(1-&gt;3)-N-acetyl-alpha-D-galactosaminyl]-L-seryl-[protein] + CMP + H(+). The protein operates within protein modification; protein glycosylation. Its pathway is glycolipid biosynthesis. Functionally, a beta-galactoside alpha2-&gt;3 sialyltransferase involved in terminal sialylation of glycoproteins and glycolipids. Catalyzes the transfer of sialic acid (N-acetyl-neuraminic acid; Neu5Ac) from the nucleotide sugar donor CMP-Neu5Ac onto acceptor Galbeta-(1-&gt;3)-GalNAc-terminated glycoconjugates through an alpha2-3 linkage. Adds sialic acid to the core 1 O-glycan, Galbeta-(1-&gt;3)-GalNAc-O-Ser/Thr, which is a major structure of mucin-type O-glycans. As part of a homeostatic mechanism that regulates CD8-positive T cell numbers, sialylates core 1 O-glycans of T cell glycoproteins, SPN/CD43 and PTPRC/CD45. Prevents premature apoptosis of thymic CD8-positive T cells prior to peripheral emigration, whereas in the secondary lymphoid organs controls the survival of CD8-positive memory T cells generated following a successful immune response. Transfers sialic acid to asialofetuin, presumably onto Galbeta-(1-&gt;3)-GalNAc-O-Ser. Sialylates GM1a, GA1 and GD1b gangliosides to form GD1a, GM1b and GT1b, respectively. The sequence is that of CMP-N-acetylneuraminate-beta-galactosamide-alpha-2,3-sialyltransferase 1 (St3gal1) from Mus musculus (Mouse).